Consider the following 340-residue polypeptide: Extracellular matrix protein-binding protein emp (340 aa).

The signal sequence occupies residues 1 to 26 (MKKKLLVLTMSTLFATQLINSNHANA).

The protein localises to the cell surface. Its function is as follows. Adhesin that binds to the host cell extracellular matrix proteins fibronectin, fibrinogen, collagen, and vitronectin. This Staphylococcus aureus protein is Extracellular matrix protein-binding protein emp (emp).